A 216-amino-acid polypeptide reads, in one-letter code: MQKFTVHQGLVAPMDRENVDTDAIIPKQFLKSIRKTGFGPNLFDEWRYLDAGFPGQDPASRKPNPDFVLNQARYKGASILLARKNFGCGSSREHAPWALDQFGFRAIIAPSYADIFFNNSFKNGLLPIVLPEAQVAQLFDEALAFPGYTLTIDLERQVIVKAQGEELPFDVQAFRKYCLLNGFDDIGLTLLQSDKIKAFEAQRLAGKPWLSHTVAG.

The protein belongs to the LeuD family. LeuD type 1 subfamily. In terms of assembly, heterodimer of LeuC and LeuD.

It carries out the reaction (2R,3S)-3-isopropylmalate = (2S)-2-isopropylmalate. It participates in amino-acid biosynthesis; L-leucine biosynthesis; L-leucine from 3-methyl-2-oxobutanoate: step 2/4. In terms of biological role, catalyzes the isomerization between 2-isopropylmalate and 3-isopropylmalate, via the formation of 2-isopropylmaleate. The sequence is that of 3-isopropylmalate dehydratase small subunit from Polaromonas naphthalenivorans (strain CJ2).